A 1067-amino-acid polypeptide reads, in one-letter code: Mediator of RNA polymerase II transcription subunit 5 (1067 aa).

The protein belongs to the Mediator complex subunit 5 family. Component of the Mediator complex.

The protein resides in the nucleus. Functionally, component of the Mediator complex, a coactivator involved in the regulated transcription of nearly all RNA polymerase II-dependent genes. Mediator functions as a bridge to convey information from gene-specific regulatory proteins to the basal RNA polymerase II transcription machinery. Mediator is recruited to promoters by direct interactions with regulatory proteins and serves as a scaffold for the assembly of a functional preinitiation complex with RNA polymerase II and the general transcription factors. The chain is Mediator of RNA polymerase II transcription subunit 5 (NUT1) from Kluyveromyces lactis (strain ATCC 8585 / CBS 2359 / DSM 70799 / NBRC 1267 / NRRL Y-1140 / WM37) (Yeast).